The chain runs to 129 residues: Large ribosomal subunit protein bL17 (129 aa).

Belongs to the bacterial ribosomal protein bL17 family. In terms of assembly, part of the 50S ribosomal subunit. Contacts protein L32.

The protein is Large ribosomal subunit protein bL17 of Acidovorax ebreus (strain TPSY) (Diaphorobacter sp. (strain TPSY)).